A 193-amino-acid chain; its full sequence is Ion-translocating oxidoreductase complex subunit B (193 aa).

The interval 1 to 26 is hydrophobic; sequence MSTMLIAVILLTLLALFFGVLLGFAA. The region spanning 32–90 is the 4Fe-4S domain; sequence EGNPIVDELEAILPQTQCGQCGYPGCRPYAEAIANGDKVNKCPPGGTATMEKLASLMGV. 12 residues coordinate [4Fe-4S] cluster: Cys-49, Cys-52, Cys-57, Cys-73, Cys-114, Cys-117, Cys-120, Cys-124, Cys-144, Cys-147, Cys-150, and Cys-154. 4Fe-4S ferredoxin-type domains follow at residues 105-134 and 136-164; these read KVAY…GAGK and MHTV…MIPV.

This sequence belongs to the 4Fe4S bacterial-type ferredoxin family. RnfB subfamily. The complex is composed of six subunits: RnfA, RnfB, RnfC, RnfD, RnfE and RnfG. The cofactor is [4Fe-4S] cluster.

It is found in the cell inner membrane. Part of a membrane-bound complex that couples electron transfer with translocation of ions across the membrane. This is Ion-translocating oxidoreductase complex subunit B from Shewanella sp. (strain MR-7).